Here is a 241-residue protein sequence, read N- to C-terminus: Small ribosomal subunit protein uS2 (241 aa).

It belongs to the universal ribosomal protein uS2 family.

The protein is Small ribosomal subunit protein uS2 of Erwinia tasmaniensis (strain DSM 17950 / CFBP 7177 / CIP 109463 / NCPPB 4357 / Et1/99).